Consider the following 73-residue polypeptide: Large ribosomal subunit protein uL29 (73 aa).

A disordered region spans residues 1–20; sequence MYKAKDLRDQSLEELEATHD.

The protein belongs to the universal ribosomal protein uL29 family.

This chain is Large ribosomal subunit protein uL29, found in Protochlamydia amoebophila (strain UWE25).